Consider the following 357-residue polypeptide: Phosphoribosylformylglycinamidine cyclo-ligase (357 aa).

It belongs to the AIR synthase family.

It localises to the cytoplasm. It catalyses the reaction 2-formamido-N(1)-(5-O-phospho-beta-D-ribosyl)acetamidine + ATP = 5-amino-1-(5-phospho-beta-D-ribosyl)imidazole + ADP + phosphate + H(+). It functions in the pathway purine metabolism; IMP biosynthesis via de novo pathway; 5-amino-1-(5-phospho-D-ribosyl)imidazole from N(2)-formyl-N(1)-(5-phospho-D-ribosyl)glycinamide: step 2/2. The chain is Phosphoribosylformylglycinamidine cyclo-ligase from Rhizobium rhizogenes (strain K84 / ATCC BAA-868) (Agrobacterium radiobacter).